Here is a 460-residue protein sequence, read N- to C-terminus: MATGKIVQVIGAVVDAEFPQDSVPKVYDALEVMNGKEKLVLEVQQQLGGGIVRCIAMGTSDGLSRGLKVEDLGHPIEVPVGKATLGRIMNVLGTPIDMKGEIETEERWSIHREAPTYEELSNSQELLETGIKVMDLICPFAKGGKVGLFGGAGVGKTVNMMELIRNIAIEHSGYSVFAGVGERTREGNDFYHEMTDSNVLDKVSLVYGQMNEPPGNRLRVALTGLTMAEKFRDEGRDVLLFVDNIYRYTLAGTEVSALLGRMPSAVGYQPTLAEEMGVLQERITSTKTGSITSVQAVYVPADDLTDPSPATTFAHLDATVVLSRQIASLGIYPAVDPLDSTSRQLDPLVVGQEHYDVARGVQSILQRYQELKDIIAILGMDELSEEDKLVVARARKIQRFLSQPFFVAEVFTGSPGKFVSLKDTIRGFKGILNGDYDHLPEQAFYMVGTIEEAVEKAKKL.

An ATP-binding site is contributed by 150–157 (GGAGVGKT).

Belongs to the ATPase alpha/beta chains family. As to quaternary structure, F-type ATPases have 2 components, CF(1) - the catalytic core - and CF(0) - the membrane proton channel. CF(1) has five subunits: alpha(3), beta(3), gamma(1), delta(1), epsilon(1). CF(0) has three main subunits: a(1), b(2) and c(9-12). The alpha and beta chains form an alternating ring which encloses part of the gamma chain. CF(1) is attached to CF(0) by a central stalk formed by the gamma and epsilon chains, while a peripheral stalk is formed by the delta and b chains.

It localises to the cell inner membrane. The catalysed reaction is ATP + H2O + 4 H(+)(in) = ADP + phosphate + 5 H(+)(out). Functionally, produces ATP from ADP in the presence of a proton gradient across the membrane. The catalytic sites are hosted primarily by the beta subunits. In Proteus mirabilis (strain HI4320), this protein is ATP synthase subunit beta.